The chain runs to 609 residues: Mitogen-activated protein kinase kinase kinase 3 (609 aa).

The disordered stretch occupies residues 1–202; that stretch reads MPTWWGRKSC…SAVHGSRIGG (202 aa). The span at 11-28 shows a compositional bias: basic and acidic residues; the sequence is KNKDDNHRGIISTDRDIK. 2 stretches are compositionally biased toward low complexity: residues 40–64 and 90–108; these read PTRG…GFDS and VSGS…SSGS. One can recognise a Protein kinase domain in the interval 214 to 470; it reads WKKGKFLGSG…ASQLLEHPFL (257 aa). ATP-binding positions include 220 to 228 and K243; that span reads LGSGTFGQV. The Proton acceptor role is filled by D339. 2 disordered regions span residues 487–511 and 590–609; these read PRSY…SHDN and MEPS…SRLV. The span at 594–609 shows a compositional bias: polar residues; that stretch reads SFRTQTPNSPLRSRLV.

It belongs to the protein kinase superfamily. STE Ser/Thr protein kinase family. MAP kinase kinase kinase subfamily. Interacts with PBL27. In terms of tissue distribution, expressed in flower buds, roots, leaves, seedlings, stems and immature siliques. Absent of mature pollen.

It carries out the reaction L-seryl-[protein] + ATP = O-phospho-L-seryl-[protein] + ADP + H(+). It catalyses the reaction L-threonyl-[protein] + ATP = O-phospho-L-threonyl-[protein] + ADP + H(+). The sequence is that of Mitogen-activated protein kinase kinase kinase 3 from Arabidopsis thaliana (Mouse-ear cress).